A 76-amino-acid chain; its full sequence is Large ribosomal subunit protein eL38 (76 aa).

The protein belongs to the eukaryotic ribosomal protein eL38 family.

This Lysiphlebus testaceipes (Greenbugs aphid parastoid) protein is Large ribosomal subunit protein eL38 (RpL38).